The sequence spans 216 residues: Refilin-B (216 aa).

Residues 1-55 (MVGRLSLQDVPELVDTKKKGDGVLDSPDSGLPPSPSPSHWGLAATAGGGGERAPV) are disordered. A phosphoserine mark is found at serine 6 and serine 26.

It belongs to the Refilin family. Interacts with FLNA and FLNB. Detected in various tissues, with highest expression in lung, followed by spleen.

Its subcellular location is the cytoplasm. It localises to the cytoskeleton. Involved in the regulation of the perinuclear actin network and nuclear shape through interaction with filamins. Plays an essential role in the formation of cartilaginous skeletal elements. This chain is Refilin-B, found in Mus musculus (Mouse).